Reading from the N-terminus, the 129-residue chain is MLHMHIASWVLLIILFFAAYFNFSEKQGASPYFKPIHMLLRLFMLLVLISGFWVWIQSFSSGAAGGHMLLTLKMICGVAVVALMEVTITKRKKGQPSHGLMWTTIVVIILTMIIGIILPMGPITQMFGL.

Helical transmembrane passes span 1–21 (MLHM…AAYF), 36–56 (IHML…WVWI), 68–88 (MLLT…EVTI), and 100–120 (LMWT…ILPM).

This sequence belongs to the UPF0344 family.

Its subcellular location is the cell membrane. The chain is UPF0344 protein SSP1805 from Staphylococcus saprophyticus subsp. saprophyticus (strain ATCC 15305 / DSM 20229 / NCIMB 8711 / NCTC 7292 / S-41).